The following is a 242-amino-acid chain: Placenta-expressed transcript 1 protein (242 aa).

An N-terminal signal peptide occupies residues 1-26 (MAVLRSLLPQLGLFLCLALCFSPALS). Residues N47, N56, and N66 are each glycosylated (N-linked (GlcNAc...) asparagine). S223 carries the GPI-anchor amidated serine lipid modification. Residues 224 to 242 (PLAGALHILLVFLISKLLF) constitute a propeptide, removed in mature form.

Post-translationally, N-glycosylated. GPI-anchored. In terms of tissue distribution, present at high level in the dermal sheath cells near the bulge area of the hair follicle and in the differentiated sebocytes of the normal adult skin (at protein level).

Its subcellular location is the apical cell membrane. Its function is as follows. Modulates leading keratinocyte migration and cellular adhesion to matrix proteins during a wound-healing response and promotes wound repair. May play a role during trichilemmal differentiation of the hair follicle. The chain is Placenta-expressed transcript 1 protein (PLET1) from Mesocricetus auratus (Golden hamster).